A 439-amino-acid polypeptide reads, in one-letter code: Glycosyl hydrolase DigH (439 aa).

The first 27 residues, 1 to 27 (MDICSRNKKLTIRRPAILVALALLLCS), serve as a signal peptide directing secretion. A lipid anchor (N-palmitoyl cysteine) is attached at Cys-28. Cys-28 is lipidated: S-diacylglycerol cysteine. Positions 34 to 54 (ESMVTPPAGSKPPATTQQSSQ) are disordered.

It belongs to the glycosyl hydrolase-like 10 (GHL10) family.

The protein resides in the cell outer membrane. Divisome-localized glycosyl hydrolase that cleaves peptide-free (denuded) peptidoglycans. The sequence is that of Glycosyl hydrolase DigH from Escherichia coli O157:H7.